Reading from the N-terminus, the 281-residue chain is Probable endonuclease 4 (281 aa).

Zn(2+) is bound by residues His70, His110, Glu146, Asp180, His183, His217, Asp230, His232, and Glu262.

It belongs to the AP endonuclease 2 family. Requires Zn(2+) as cofactor.

The catalysed reaction is Endonucleolytic cleavage to 5'-phosphooligonucleotide end-products.. Functionally, endonuclease IV plays a role in DNA repair. It cleaves phosphodiester bonds at apurinic or apyrimidinic (AP) sites, generating a 3'-hydroxyl group and a 5'-terminal sugar phosphate. The sequence is that of Probable endonuclease 4 from Nitratiruptor sp. (strain SB155-2).